The sequence spans 652 residues: Threonine--tRNA ligase (652 aa).

The TGS domain occupies Met-1–Thr-61. The tract at residues Asp-243–Pro-548 is catalytic. Residues Cys-348, His-399, and His-525 each coordinate Zn(2+).

It belongs to the class-II aminoacyl-tRNA synthetase family. As to quaternary structure, homodimer. Zn(2+) serves as cofactor.

The protein resides in the cytoplasm. It catalyses the reaction tRNA(Thr) + L-threonine + ATP = L-threonyl-tRNA(Thr) + AMP + diphosphate + H(+). In terms of biological role, catalyzes the attachment of threonine to tRNA(Thr) in a two-step reaction: L-threonine is first activated by ATP to form Thr-AMP and then transferred to the acceptor end of tRNA(Thr). Also edits incorrectly charged L-seryl-tRNA(Thr). The polypeptide is Threonine--tRNA ligase (Parvibaculum lavamentivorans (strain DS-1 / DSM 13023 / NCIMB 13966)).